The chain runs to 548 residues: MPTINVKKADLERLVNMPLEDEFIEEKFPMMGVEVEGIFEEDGEKIIQFSINPNRPDYLSAEGLARGFRGIIGIETGLKKYDIESSDVKLYVENVETRPYIAMALVKGVIVDDYVLESIINLQEKLHWVMGRDRKKVAIGIHDADKVKPPFYYKEVSGDGIKFVPLNSDEEMTPREILEKHEKGIKYAHLIKDDKFPIILDSEGDVLSMPPIINGELTRVTTETRNLLIDVTGTDKYAVEKTLNIIVTALAERKYGKIHAVEVIKDNQSTIYPNLKEDVLETTSEYINKVLGANLTPGTIINYLRRCRLDAQFVDNKIKVFIPAYRVDIFGEIDIAEEVAIAYGYNKFSGEYPIIGTIGELNQLEKKCDFIREIMVGFGFYEVINLMLSNDEVLFKKMRIEDNNYIEVLKPASIEHRIVRKSILPLLMETLRINKHKELPQKIFEIGDCVVIDENAETKSRVVKKIAGVIVDNETNFNEIKSYVEGLLRELKIEYELDNFEHPSFIKGRCAKILKDGKIIGYFGEIHPEVITNFELEFPVVGFELEIE.

The 76-residue stretch at 275–350 (LKEDVLETTS…IAYGYNKFSG (76 aa)) folds into the B5 domain. Positions 328, 334, 337, and 338 each coordinate Mg(2+).

It belongs to the phenylalanyl-tRNA synthetase beta subunit family. Type 2 subfamily. As to quaternary structure, tetramer of two alpha and two beta subunits. Mg(2+) serves as cofactor.

The protein localises to the cytoplasm. The enzyme catalyses tRNA(Phe) + L-phenylalanine + ATP = L-phenylalanyl-tRNA(Phe) + AMP + diphosphate + H(+). The chain is Phenylalanine--tRNA ligase beta subunit from Methanocaldococcus jannaschii (strain ATCC 43067 / DSM 2661 / JAL-1 / JCM 10045 / NBRC 100440) (Methanococcus jannaschii).